The following is a 110-amino-acid chain: Parvalbumin alpha (110 aa).

Residue Ser-2 is modified to N-acetylserine. 2 positions are modified to phosphoserine: Ser-2 and Ser-24. EF-hand domains follow at residues 39-74 (KSAD…FSPD) and 78-110 (LSAK…VAES). 11 residues coordinate Ca(2+): Asp-52, Asp-54, Ser-56, Phe-58, Glu-60, Glu-63, Asp-91, Asp-93, Asp-95, Lys-97, and Glu-102.

Functionally, in muscle, parvalbumin is thought to be involved in relaxation after contraction. It binds two calcium ions. This chain is Parvalbumin alpha (PVALB), found in Homo sapiens (Human).